The primary structure comprises 159 residues: NADH-quinone oxidoreductase subunit I (159 aa).

4Fe-4S ferredoxin-type domains are found at residues 51 to 80 (RRYE…IEAD) and 90 to 119 (TRYD…EGPN). 8 residues coordinate [4Fe-4S] cluster: cysteine 60, cysteine 63, cysteine 66, cysteine 70, cysteine 99, cysteine 102, cysteine 105, and cysteine 109.

It belongs to the complex I 23 kDa subunit family. In terms of assembly, NDH-1 is composed of 14 different subunits. Subunits NuoA, H, J, K, L, M, N constitute the membrane sector of the complex. The cofactor is [4Fe-4S] cluster.

It is found in the cell inner membrane. The enzyme catalyses a quinone + NADH + 5 H(+)(in) = a quinol + NAD(+) + 4 H(+)(out). Functionally, NDH-1 shuttles electrons from NADH, via FMN and iron-sulfur (Fe-S) centers, to quinones in the respiratory chain. The immediate electron acceptor for the enzyme in this species is believed to be ubiquinone. Couples the redox reaction to proton translocation (for every two electrons transferred, four hydrogen ions are translocated across the cytoplasmic membrane), and thus conserves the redox energy in a proton gradient. The protein is NADH-quinone oxidoreductase subunit I of Rickettsia peacockii (strain Rustic).